A 278-amino-acid polypeptide reads, in one-letter code: Probable esterase TOX9 (278 aa).

Catalysis depends on charge relay system residues Ser119, Asp222, and His250.

This sequence belongs to the LovG family.

It participates in mycotoxin biosynthesis. Probable esterase; part of the Tox1A locus, one of the 2 loci that mediate the biosynthesis of T-toxin, a family of linear polyketides 37 to 45 carbons in length, of which the major component is 41 carbons, and which leads to high virulence to maize. One of the PKSs (PKS1 or PKS2) could synthesize a precursor, used subsequently by the other PKS as starter unit, to add additional carbons. Variability in the length of the final carbon backbone C35-47 could be achieved by varying the number of condensation cycles, or use of different starter or extender units or might be due to decarboxylation of the penultimate product, catalyzed by DEC1. Additional proteins are required for the biosynthesis of T-toxin, including oxidoreductases RED1, RED2, RED3, LAM1 and OXI1, as well as esterase TOX9. This Cochliobolus heterostrophus (strain C4 / ATCC 48331 / race T) (Southern corn leaf blight fungus) protein is Probable esterase TOX9.